A 239-amino-acid polypeptide reads, in one-letter code: Small ribosomal subunit protein uS3c (239 aa).

A KH type-2 domain is found at 43–139 (IKNYIQKNRK…RLNISIEKVK (97 aa)). Residues 50–80 (NRKKSSNRKLESDSSSEVITHNRKNDSGSSS) are disordered.

It belongs to the universal ribosomal protein uS3 family. As to quaternary structure, part of the 30S ribosomal subunit.

The protein resides in the plastid. It is found in the chloroplast. This Lolium perenne (Perennial ryegrass) protein is Small ribosomal subunit protein uS3c (rps3).